A 999-amino-acid chain; its full sequence is Ulvan lyase, long isoform (999 aa).

Positions 1-21 (MKCLKTLLVSTTLLGAFSLNA) are cleaved as a signal peptide. 126 to 127 (SH) is a substrate binding site. The active-site Proton donor/acceptor is the H127. 3 residues coordinate Ca(2+): D189, D199, and K201. The substrate site is built by Y280 and R297. Residues D300, D303, and Y305 each coordinate Ca(2+). Residue Y361 participates in substrate binding.

The protein belongs to the polysaccharide lyase 24 family.

Its function is as follows. Ulvan lyase involved in ulvan degradation. Ulvan is the main polysaccharide component of the Ulvales (green seaweed) cell wall. It is composed of disaccharide building blocks comprising 3-sulfated rhamnose (Rha3S) linked to D-glucuronic acid (GlcA), L-iduronic acid (IduA), or D-xylose (Xyl). Ulvan lyase catalyzes preferentially the endolytic cleavage of the glycosidic bond between Rha3S and the uronic acid GlcA, but not IduA, producing oligosaccharides that have unsaturated 4-deoxy-L-threo-hex-4-enopyranosiduronic acid (deltaUA) at the non-reducing end. The most abundant end products in the degradation of the ulvan polysaccharide were deltaUA-Rha3S disaccharides and deltaUA-Rha3S-IduA-Rha3S and deltaUA-Rha3S-Xyl-Rha3S tetrasaccharides. The sequence is that of Ulvan lyase, long isoform from Alteromonas sp.